We begin with the raw amino-acid sequence, 119 residues long: Large ribosomal subunit protein bL20 (119 aa).

Belongs to the bacterial ribosomal protein bL20 family.

Its function is as follows. Binds directly to 23S ribosomal RNA and is necessary for the in vitro assembly process of the 50S ribosomal subunit. It is not involved in the protein synthesizing functions of that subunit. The sequence is that of Large ribosomal subunit protein bL20 from Deinococcus geothermalis (strain DSM 11300 / CIP 105573 / AG-3a).